We begin with the raw amino-acid sequence, 295 residues long: MMRILLFLATNLAVVLIASITLSLFGFNGFMAANGVDLNLNQLLIFCAVFGFAGSLFSLFISKWMAKMSTSTQIITQPRTRHEQWLLHTVEQLSREAGIKMPEVGIFPAYEANAFATGWNKNDALVAVSQGLLERFSPDEVKAVLAHEIGHVANGDMVTLALIQGVVNTFVMFFARIIGNFVDKVIFKNEEGQGIAYYVATIFAELVLGILASAIVMWFSRKREYRADEAGARLAGTNAMIGALQRLRSEQGLPVHMPDTLNAFGINGGIKQGLARMFMSHPPLEERIEALRRRG.

2 helical membrane passes run 4–24 (ILLF…TLSL) and 42–62 (QLLI…LFIS). His-147 serves as a coordination point for Zn(2+). Glu-148 is an active-site residue. His-151 contributes to the Zn(2+) binding site. Helical transmembrane passes span 158–178 (VTLA…ARII) and 199–219 (VATI…VMWF). Glu-224 contacts Zn(2+).

The protein belongs to the peptidase M48B family. Requires Zn(2+) as cofactor.

It is found in the cell inner membrane. This chain is Protease HtpX, found in Pseudomonas fluorescens (strain ATCC BAA-477 / NRRL B-23932 / Pf-5).